Consider the following 339-residue polypeptide: Serine/threonine-protein kinase SAPK2 (339 aa).

Residues 4-260 form the Protein kinase domain; sequence YEVIKDIGSG…IPEIKNHPWF (257 aa). Residues 10–18 and Lys-33 each bind ATP; that span reads IGSGNFGVA. The Proton acceptor role is filled by Asp-123. Residues 253-339 form a C-terminal region; sequence EIKNHPWFLK…EDSGDFVCAL (87 aa).

Belongs to the protein kinase superfamily. Ser/Thr protein kinase family. In terms of processing, phosphorylated.

The catalysed reaction is L-seryl-[protein] + ATP = O-phospho-L-seryl-[protein] + ADP + H(+). It carries out the reaction L-threonyl-[protein] + ATP = O-phospho-L-threonyl-[protein] + ADP + H(+). In terms of biological role, may play a role in signal transduction of hyperosmotic response. Can phosphorylate BZIP46 in vitro. The chain is Serine/threonine-protein kinase SAPK2 (SAPK2) from Oryza sativa subsp. indica (Rice).